A 547-amino-acid chain; its full sequence is Chaperonin GroEL (547 aa).

ATP-binding positions include 29–32 (TLGP), 86–90 (DGTTT), G413, 479–481 (NAA), and D495.

The protein belongs to the chaperonin (HSP60) family. In terms of assembly, forms a cylinder of 14 subunits composed of two heptameric rings stacked back-to-back. Interacts with the co-chaperonin GroES.

Its subcellular location is the cytoplasm. The catalysed reaction is ATP + H2O + a folded polypeptide = ADP + phosphate + an unfolded polypeptide.. In terms of biological role, together with its co-chaperonin GroES, plays an essential role in assisting protein folding. The GroEL-GroES system forms a nano-cage that allows encapsulation of the non-native substrate proteins and provides a physical environment optimized to promote and accelerate protein folding. In Synechococcus sp. (strain RCC307), this protein is Chaperonin GroEL.